The following is a 190-amino-acid chain: GTP cyclohydrolase 1 1 (190 aa).

It belongs to the GTP cyclohydrolase I family. In terms of assembly, homomer.

The enzyme catalyses GTP + H2O = 7,8-dihydroneopterin 3'-triphosphate + formate + H(+). It functions in the pathway cofactor biosynthesis; 7,8-dihydroneopterin triphosphate biosynthesis; 7,8-dihydroneopterin triphosphate from GTP: step 1/1. In Pseudomonas putida (strain ATCC 47054 / DSM 6125 / CFBP 8728 / NCIMB 11950 / KT2440), this protein is GTP cyclohydrolase 1 1.